Here is a 411-residue protein sequence, read N- to C-terminus: 1-deoxy-D-xylulose 5-phosphate reductoisomerase (411 aa).

NADPH is bound by residues Thr11, Gly12, Ser13, Ile14, and Asn124. Lys125 is a binding site for 1-deoxy-D-xylulose 5-phosphate. Residue Glu126 coordinates NADPH. Residue Asp150 participates in Mn(2+) binding. 1-deoxy-D-xylulose 5-phosphate contacts are provided by Ser151, Glu152, Ser186, and His209. Residue Glu152 participates in Mn(2+) binding. Gly215 serves as a coordination point for NADPH. Positions 222, 227, 228, and 231 each coordinate 1-deoxy-D-xylulose 5-phosphate. Glu231 contributes to the Mn(2+) binding site.

The protein belongs to the DXR family. Mg(2+) serves as cofactor. It depends on Mn(2+) as a cofactor.

It catalyses the reaction 2-C-methyl-D-erythritol 4-phosphate + NADP(+) = 1-deoxy-D-xylulose 5-phosphate + NADPH + H(+). Its pathway is isoprenoid biosynthesis; isopentenyl diphosphate biosynthesis via DXP pathway; isopentenyl diphosphate from 1-deoxy-D-xylulose 5-phosphate: step 1/6. Catalyzes the NADPH-dependent rearrangement and reduction of 1-deoxy-D-xylulose-5-phosphate (DXP) to 2-C-methyl-D-erythritol 4-phosphate (MEP). The chain is 1-deoxy-D-xylulose 5-phosphate reductoisomerase from Psychrobacter sp. (strain PRwf-1).